We begin with the raw amino-acid sequence, 970 residues long: Toxin subunit YenC2 (970 aa).

RHS repeat units follow at residues 168–182 (AGQC…GLIQ), 297–311 (GVVT…TQRL), 329–343 (LQDL…GNVL), 361–375 (VPEN…YQLV), 408–422 (NYTR…GNLM), 500–514 (DDSE…SQRI), 580–594 (NDQI…TCSS), 606–620 (SMEE…AVWA), and 640–654 (DATG…YYQP). The tract at residues 610-690 (YYPYGGTAVW…PLRLTDPDGM (81 aa)) is RHS-repeat associated core domain. Residues 849-950 (TEAFITGIRS…YNCSGIISGL (102 aa)) form a deaminase domain region.

The protein belongs to the RHS family. As to quaternary structure, semipurified toxin complex consists of at least YenA1-YenA2-YenB-YenC1-YenC2-Chi1-Chi2. YenB and the N-terminus of YenC2 form a large hollow shell of beta-strands. The shell is closed at both ends, within which the C-terminus of YenC2 is probably found. The C-terminal region dissociates from the YenB-YenC2 complex at pH 4.5 but not 7.5. The Yen-TC:K9 subcomplex is about 26 nm tall and 22 nm in diameter with 5-fold symmetry and 5 copies of YenA1, YenA2, Chi1 and Chi2; the chitinase subunits may be solvent accessible on the exterior the complex. The Yen-TC:K9 subcomplex has no insecticidal activity. The native complex with additional YenB, YenC1 and YenC2 subunits is 16 nm taller and is insecticidal; the toxicity-conferring subunits are present at about 1 copy each.

The protein resides in the secreted. Toxin complex is secreted when grown at 25 degrees Celsius or less; at higher temperatures the proteins are present intracellularly but not secreted. Part of an orally active toxin complex (TC) with strong insecticidal effects on larvae of the Coleoptera Costelytra zealandica, Acrossidius tasmania and Adoryphorus couloni and some Lepidoptera larvae. The TC has an endochitinase activity. This is Toxin subunit YenC2 from Yersinia entomophaga.